The sequence spans 418 residues: Trans-acting enoyl reductase (418 aa).

It belongs to the saccharopine dehydrogenase family. Enoyl reductase subfamily.

Its function is as follows. Involved in the reduction of the double bond between C-4 and C-5 during phthiocerol dimycocerosates (DIM A) and glycosylated phenolphthiocerol dimycocerosates (PGL) biosynthesis. This is Trans-acting enoyl reductase from Mycobacterium tuberculosis (strain ATCC 25177 / H37Ra).